The chain runs to 1127 residues: Structural protein MDM1 (1127 aa).

The 189-residue stretch at asparagine 85 to glutamine 273 folds into the PXA domain. Residues serine 670, serine 673, and serine 692 each carry the phosphoserine modification. Positions serine 705 to lysine 762 form a coiled coil. Residues threonine 782–lysine 905 form the PX domain.

This sequence belongs to the sorting nexin family.

It is found in the cytoplasm. Functionally, essential for mitotic growth. Mediates organelle inheritance. This Saccharomyces cerevisiae (strain ATCC 204508 / S288c) (Baker's yeast) protein is Structural protein MDM1 (MDM1).